The chain runs to 62 residues: MSKCYITGKTTLFGNRRSHAMNATKRIWKANLQNVKIIDENGKIQKVKISARALKKLKLQRA.

It belongs to the bacterial ribosomal protein bL28 family.

The polypeptide is Large ribosomal subunit protein bL28 (Aster yellows witches'-broom phytoplasma (strain AYWB)).